The primary structure comprises 852 residues: Metastasis-associated in colon cancer protein 1 (852 aa).

Ser19 carries the phosphoserine modification. Positions 212-349 (VTIACKVNHQ…LSQVMYLVVA (138 aa)) constitute a ZU5 domain. The SH3 domain occupies 549–619 (NFSNYGVTLK…HCKNVKVISK (71 aa)).

Interacts with FASLG. Preferentially expressed in metastasizing tumors.

It is found in the cytoplasm. It localises to the nucleus. Functionally, acts as a transcription activator for MET and as a key regulator of HGF-MET signaling. Promotes cell motility, proliferation and hepatocyte growth factor (HGF)-dependent scattering in vitro and tumor growth and metastasis in vivo. This Homo sapiens (Human) protein is Metastasis-associated in colon cancer protein 1 (MACC1).